Here is a 327-residue protein sequence, read N- to C-terminus: Transaldolase (327 aa).

Residue lysine 132 is the Schiff-base intermediate with substrate of the active site.

This sequence belongs to the transaldolase family. Type 1 subfamily. In terms of assembly, homodimer.

The protein resides in the cytoplasm. It catalyses the reaction D-sedoheptulose 7-phosphate + D-glyceraldehyde 3-phosphate = D-erythrose 4-phosphate + beta-D-fructose 6-phosphate. The protein operates within carbohydrate degradation; pentose phosphate pathway; D-glyceraldehyde 3-phosphate and beta-D-fructose 6-phosphate from D-ribose 5-phosphate and D-xylulose 5-phosphate (non-oxidative stage): step 2/3. Transaldolase is important for the balance of metabolites in the pentose-phosphate pathway. In Chlamydia caviae (strain ATCC VR-813 / DSM 19441 / 03DC25 / GPIC) (Chlamydophila caviae), this protein is Transaldolase.